A 312-amino-acid polypeptide reads, in one-letter code: Malate dehydrogenase (312 aa).

Residues 7 to 13 (GAAGGIG) and D34 each bind NAD(+). Residues R81 and R87 each coordinate substrate. NAD(+)-binding positions include N94 and 117–119 (ITN). 2 residues coordinate substrate: N119 and R153. H177 serves as the catalytic Proton acceptor. M227 contacts NAD(+).

Belongs to the LDH/MDH superfamily. MDH type 1 family. In terms of assembly, homodimer.

The enzyme catalyses (S)-malate + NAD(+) = oxaloacetate + NADH + H(+). Functionally, catalyzes the reversible oxidation of malate to oxaloacetate. This chain is Malate dehydrogenase, found in Escherichia coli O7:K1 (strain IAI39 / ExPEC).